A 104-amino-acid polypeptide reads, in one-letter code: Photosystem II reaction center Psb28 protein (104 aa).

The protein belongs to the Psb28 family. As to quaternary structure, part of the photosystem II complex.

The protein localises to the cellular thylakoid membrane. The chain is Photosystem II reaction center Psb28 protein from Synechococcus sp. (strain JA-2-3B'a(2-13)) (Cyanobacteria bacterium Yellowstone B-Prime).